The sequence spans 781 residues: Mitochondrial inner membrane m-AAA protease component paraplegin (781 aa).

The transit peptide at 1 to 43 directs the protein to the mitochondrion; that stretch reads MAAALLLLRALRQSPEPGPWRLWAQLSGRSPGLFSGAGGRRPY. A propeptide spans 44-105 (removed in mature form); the sequence is VVRGTPIGLA…GSTLYFNTSG (62 aa). The interval 105-134 is disordered; it reads GLKQKNKDDDKPKGKAPEDDEEERRRKERE. At 106–144 the chain is on the mitochondrial matrix side; that stretch reads LKQKNKDDDKPKGKAPEDDEEERRRKEREDQMYRERLRT. The span at 109–134 shows a compositional bias: basic and acidic residues; that stretch reads KNKDDDKPKGKAPEDDEEERRRKERE. A helical transmembrane segment spans residues 145–165; that stretch reads LFIIAIVMSLLNSLSTSGGSI. The Mitochondrial intermembrane segment spans residues 166–248; the sequence is SWADFVNEML…DRIPVSYKRT (83 aa). The helical transmembrane segment at 249 to 269 threads the bilayer; that stretch reads GFFGNALYALGMTAVGLAILW. The Mitochondrial matrix portion of the chain corresponds to 270–781; it reads YVFRLAGMTG…ASGEEEAPAP (512 aa). 7 residues coordinate ATP: Ala-312, Gly-352, Cys-353, Gly-354, Lys-355, Thr-356, and Leu-357. Tyr-505 is subject to 3'-nitrotyrosine. Position 574 (His-574) interacts with Zn(2+). The active site involves Glu-575. His-578 and Asp-650 together coordinate Zn(2+). An interaction with PPIF region spans residues 701–781; sequence HEARLLVARA…ASGEEEAPAP (81 aa).

This sequence in the N-terminal section; belongs to the AAA ATPase family. The protein in the C-terminal section; belongs to the peptidase M41 family. Forms heterooligomers with AFG3L2; the m-AAA protease is composed of heterohexamers of AFG3L2 and SPG7. Component of the mitochondrial permeability transition pore complex (mPTPC), at least composed of SPG7, VDAC1 and PPIF. Interacts with MAIP1. The cofactor is Zn(2+). In terms of processing, upon import into the mitochondrion, the N-terminal transit peptide is cleaved by the mitochondrial-processing peptidase (MPP) to generate an intermediate form which undergoes a second proteolytic cleavage mediated by proteases AFG3L2 removing an additional N-terminal fragment to generate the proteolytically active mature form.

The protein resides in the mitochondrion inner membrane. It catalyses the reaction ATP + H2O = ADP + phosphate + H(+). Its function is as follows. Catalytic component of the m-AAA protease, a protease that plays a key role in proteostasis of inner mitochondrial membrane proteins, and which is essential for axonal and neuron development. SPG7 possesses both ATPase and protease activities: the ATPase activity is required to unfold substrates, threading them into the internal proteolytic cavity for hydrolysis into small peptide fragments. The m-AAA protease exerts a dual role in the mitochondrial inner membrane: it mediates the processing of specific regulatory proteins and ensures protein quality control by degrading misfolded polypeptides. Mediates protein maturation of the mitochondrial ribosomal subunit MRPL32/bL32m by catalyzing the cleavage of the presequence of MRPL32/bL32m prior to assembly into the mitochondrial ribosome. Acts as a regulator of calcium in neurons by mediating degradation of SMDT1/EMRE before its assembly with the uniporter complex, limiting the availability of SMDT1/EMRE for MCU assembly and promoting efficient assembly of gatekeeper subunits with MCU. Also regulates mitochondrial calcium by catalyzing degradation of MCU. Plays a role in the formation and regulation of the mitochondrial permeability transition pore (mPTP) and its proteolytic activity is dispensable for this function. This chain is Mitochondrial inner membrane m-AAA protease component paraplegin (Spg7), found in Rattus norvegicus (Rat).